A 365-amino-acid polypeptide reads, in one-letter code: tRNA(Met) cytidine acetate ligase (365 aa).

ATP is bound by residues 7–20 (IAEF…HKYL), Gly96, Asn152, and Arg175.

It belongs to the TmcAL family.

It is found in the cytoplasm. The enzyme catalyses cytidine(34) in elongator tRNA(Met) + acetate + ATP = N(4)-acetylcytidine(34) in elongator tRNA(Met) + AMP + diphosphate. Catalyzes the formation of N(4)-acetylcytidine (ac(4)C) at the wobble position of elongator tRNA(Met), using acetate and ATP as substrates. First activates an acetate ion to form acetyladenylate (Ac-AMP) and then transfers the acetyl group to tRNA to form ac(4)C34. This chain is tRNA(Met) cytidine acetate ligase, found in Streptococcus pneumoniae serotype 19F (strain G54).